The chain runs to 533 residues: Large neutral amino acids transporter small subunit 2 (533 aa).

The disordered stretch occupies residues 1–33; that stretch reads MEKGTRQRNNTAKNHPDRGSDTSPEAEASSGGG. Residues 1–45 are Cytoplasmic-facing; sequence MEKGTRQRNNTAKNHPDRGSDTSPEAEASSGGGGVALKKEIGLVS. 4 positions are modified to phosphoserine: Ser20, Ser23, Ser29, and Ser30. A helical membrane pass occupies residues 46–66; that stretch reads ACGIIVGNIIGSGIFVSPKGV. Position 54 (Ile54) interacts with L-leucine. Residues 67-74 are Extracellular-facing; sequence LENAGSVG. Residues 75–96 form a helical membrane-spanning segment; the sequence is LALIVWIVTGVITAVGALCYAE. Residues 97 to 117 lie on the Cytoplasmic side of the membrane; sequence LGVTIPKSGGDYSYVKDIFGG. Residues 118 to 150 traverse the membrane as a helical segment; sequence LAGFLRLWIAVLVIYPTNQAVIALTFSNYVLQP. L-tryptophan is bound at residue Asn135. The Extracellular segment spans residues 151–158; the sequence is LFPTCFPP. A helical transmembrane segment spans residues 159 to 179; sequence ESGLRLLAAICLLLLTWVNCS. At 180–182 the chain is on the cytoplasmic side; sequence SVR. A helical transmembrane segment spans residues 183-211; sequence WATRVQDIFTAGKLLALALIIIMGVVQIC. At 212 to 231 the chain is on the extracellular side; it reads KGEFFWLEPKNAFENFQEPD. Residues 232 to 253 form a helical membrane-spanning segment; the sequence is IGLVALAFLQGSFAYGGWNFLN. Residue Gly247 coordinates L-leucine. Residues 254–266 are Cytoplasmic-facing; it reads YVTEELVDPYKNL. A helical membrane pass occupies residues 267 to 288; it reads PRAIFISIPLVTFVYVFANIAY. Over 289–313 the chain is Extracellular; that stretch reads VTAMSPQELLASNAVAVTFGEKLLG. The helical transmembrane segment at 314 to 339 threads the bilayer; it reads VMAWIMPISVALSTFGGVNGSLFTSS. The Cytoplasmic segment spans residues 340 to 365; sequence RLFFAGAREGHLPSVLAMIHVKRCTP. A helical membrane pass occupies residues 366–383; it reads IPALLFTCLSTLLMLVTS. The Extracellular segment spans residues 384–387; that stretch reads DMYT. A helical membrane pass occupies residues 388–409; the sequence is LINYVGFINYLFYGVTVAGQIV. Asn396 contributes to the L-tryptophan binding site. Residues 410 to 424 are Cytoplasmic-facing; it reads LRWKKPDIPRPIKIS. 2 consecutive transmembrane segments (helical) span residues 425–447 and 448–467; these read LLFP…WSEP and VVCG…YFLG. Over 468-533 the chain is Cytoplasmic; the sequence is VYWQHKPKCF…VKDPDSEEQP (66 aa). Residues 500–533 are disordered; it reads GDSGTEETIDDVEEQHKPIFQPTPVKDPDSEEQP. Over residues 502 to 512 the composition is skewed to acidic residues; sequence SGTEETIDDVE. Position 529 is a phosphoserine (Ser529).

Belongs to the amino acid-polyamine-organocation (APC) superfamily. L-type amino acid transporter (LAT) (TC 2.A.3.8) family. In terms of assembly, disulfide-linked heterodimer composed of the catalytic light chain subunit SLC7A8 and the heavy chain subunit SLC3A2. SLC3A2 acts as a chaperone for correct plasma membrane trafficking and stabilization of SLC7A8 and modulates the substrate affinity and specificity of SLC7A8. ICAM-1 associates with the heterodimer SLC3A2/SLC7A8; facilitates leucine uptake. In terms of tissue distribution, expression is seen in jejunum mucosa and the epithelial cells of the jejunum, ileum and colon, as well as in kidney, placenta, brain, testis and skeletal muscle. Expressed in retina, inner blood-retinal barrier of retina, retinal vascular endothelial cells. Also expressed in the intestinal epithelial cell line IEC-6 and in the retinal capillary endothelial cell line TR-iBRB2.

It is found in the cell membrane. It localises to the basolateral cell membrane. The enzyme catalyses L-dopa(out) + L-phenylalanine(in) = L-dopa(in) + L-phenylalanine(out). The catalysed reaction is 3,3'-diiodo-L-thyronine(out) = 3,3'-diiodo-L-thyronine(in). It carries out the reaction L-histidine(in) + L-phenylalanine(out) = L-histidine(out) + L-phenylalanine(in). It catalyses the reaction L-tryptophan(in) + L-phenylalanine(out) = L-tryptophan(out) + L-phenylalanine(in). The enzyme catalyses L-isoleucine(in) + L-phenylalanine(out) = L-isoleucine(out) + L-phenylalanine(in). The catalysed reaction is L-valine(in) + L-phenylalanine(out) = L-valine(out) + L-phenylalanine(in). It carries out the reaction L-leucine(in) + L-phenylalanine(out) = L-leucine(out) + L-phenylalanine(in). It catalyses the reaction L-glutamine(in) + L-phenylalanine(out) = L-glutamine(out) + L-phenylalanine(in). The enzyme catalyses L-cysteine(in) + L-phenylalanine(out) = L-cysteine(out) + L-phenylalanine(in). The catalysed reaction is L-phenylalanine(out) + L-methionine(in) = L-phenylalanine(in) + L-methionine(out). It carries out the reaction L-leucine(out) + L-methionine(in) = L-leucine(in) + L-methionine(out). It catalyses the reaction L-cysteine(out) + L-methionine(in) = L-cysteine(in) + L-methionine(out). The enzyme catalyses S-methylmercury-L-cysteine(out) + L-methionine(in) = S-methylmercury-L-cysteine(in) + L-methionine(out). The catalysed reaction is S-methylmercury-L-cysteine(in) + L-leucine(out) = S-methylmercury-L-cysteine(out) + L-leucine(in). It carries out the reaction S-methylmercury-L-cysteine(in) + L-phenylalanine(out) = S-methylmercury-L-cysteine(out) + L-phenylalanine(in). It catalyses the reaction L-phenylalanine(out) + L-serine(in) = L-phenylalanine(in) + L-serine(out). The enzyme catalyses L-phenylalanine(out) + glycine(in) = L-phenylalanine(in) + glycine(out). The catalysed reaction is L-phenylalanine(out) + L-alanine(in) = L-phenylalanine(in) + L-alanine(out). It carries out the reaction 3,3',5-triiodo-L-thyronine(out) = 3,3',5-triiodo-L-thyronine(in). Its activity is regulated as follows. Leucine transport activity is inhibited by 2-amino-bicyclo-(2,2,1)-heptane-2-carboxylate (BCH), glycine, L-isomers of the neutral amino acids and histidine. Associates with SLC3A2 to form a functional heterodimeric complex that translocates small and large neutral amino acids with broad specificity and a stoichiometry of 1:1. Functions as amino acid antiporter mediating the influx of extracellular essential amino acids mainly in exchange with the efflux of highly concentrated intracellular amino acids. Has relatively symmetrical selectivities but strongly asymmetrical substrate affinities at both the intracellular and extracellular sides of the transporter. This asymmetry allows SLC7A8 to regulate intracellular amino acid pools (mM concentrations) by exchange with external amino acids (uM concentration range), equilibrating the relative concentrations of different amino acids across the plasma membrane instead of mediating their net uptake. May play an essential role in the reabsorption of neutral amino acids from the epithelial cells to the bloodstream in the kidney. Involved in the uptake of methylmercury (MeHg) when administered as the L-cysteine or D,L-homocysteine complexes, and hence plays a role in metal ion homeostasis and toxicity. Involved in the cellular activity of small molecular weight nitrosothiols, via the stereoselective transport of L-nitrosocysteine (L-CNSO) across the transmembrane. Imports the thyroid hormone diiodothyronine (T2) and to a smaller extent triiodothyronine (T3) but not rT 3 or thyroxine (T4). Mediates the uptake of L-DOPA. May participate in auditory function. This chain is Large neutral amino acids transporter small subunit 2 (Slc7a8), found in Rattus norvegicus (Rat).